A 395-amino-acid polypeptide reads, in one-letter code: F-box/kelch-repeat protein At4g39570 (395 aa).

A compositionally biased stretch (basic residues) spans 1–25; that stretch reads MSSPERKRKRVTSTKNPSVKKKKKI. The tract at residues 1-29 is disordered; that stretch reads MSSPERKRKRVTSTKNPSVKKKKKISPVP. In terms of domain architecture, F-box spans 29 to 75; sequence PTPIPSLPDDLLVSIFARVSRLYYPILSLVSKSFRSLLRSPELYETR. 2 Kelch repeats span residues 150 to 197 and 198 to 246; these read DIYF…VIDG and KIYV…RSAY.

This Arabidopsis thaliana (Mouse-ear cress) protein is F-box/kelch-repeat protein At4g39570.